Reading from the N-terminus, the 443-residue chain is Thymidine phosphorylase (443 aa).

It belongs to the thymidine/pyrimidine-nucleoside phosphorylase family. Homodimer.

The enzyme catalyses thymidine + phosphate = 2-deoxy-alpha-D-ribose 1-phosphate + thymine. It participates in pyrimidine metabolism; dTMP biosynthesis via salvage pathway; dTMP from thymine: step 1/2. The enzymes which catalyze the reversible phosphorolysis of pyrimidine nucleosides are involved in the degradation of these compounds and in their utilization as carbon and energy sources, or in the rescue of pyrimidine bases for nucleotide synthesis. This is Thymidine phosphorylase from Shewanella woodyi (strain ATCC 51908 / MS32).